Here is a 153-residue protein sequence, read N- to C-terminus: Neuromedin-S (153 aa).

An N-terminal signal peptide occupies residues 1–26 (MKHPLPHYSPILFIYCFCMLQIPSSG). 3 consecutive propeptides follow at residues 27–69 (ASPP…VYKR), 70–105 (FLFHYSRTRKPTHPVSAEFAPVHPLMRLAAKLASRR), and 106–108 (MKR). Asn-144 carries the post-translational modification Asparagine amide. Residues 147-153 (YTDNNFQ) constitute a propeptide that is removed on maturation.

Belongs to the NmU family.

Its subcellular location is the secreted. Implicated in the regulation of circadian rhythms through autocrine and/or paracrine actions. In Mus musculus (Mouse), this protein is Neuromedin-S (Nms).